A 553-amino-acid polypeptide reads, in one-letter code: MRSDVIKKGYIRAPHRSLLRATGLKDDDFKKPFIGVCNSFAEIIPGHFFLNKFAKIIKDEIRKNGCVPFEFNCIGVDDGIAMGHDGMLYSLPSREIIANSVETMMNAHKLDALICIPNCDKIVPGMIMGALRVNVPTIFISGGPMAAGRGKNGEALDLNSTFEAVGAYEVKKINKKELHDIECAACPGAGSCSGMFTANSMNTLCEAMGIALKGNGTILAMTKNRKKLAKKAARRICEIALDDKFKIRNIINKKAVENAMVVDMAMGGSSNTILHMLAISREAGCALDIKELNEISKKTPHIAKIAPSKPEIHMQDVHNAGGINAIMNEVKDLLHLDNLTVTGETLGERIKGAKIKDEDVIHKVENAYSKVGGLAILFGNLAEQGCVIKAAGIIGSRKFSGKAICFNSQDEAIEGISGGKVKKGDVVVIRYEGPKGGPGMQEMLSPTSLIVGRGLGADVALITDGRFSGATRGLCIGHVSPEAAEGGMIGLLKDGDIIDIDVDNFSINVRLSEDEIAERKKEFKYGGKKVQSRWLRQYQKLVTNASNGAILEA.

Aspartate 78 serves as a coordination point for Mg(2+). Position 119 (cysteine 119) interacts with [2Fe-2S] cluster. Positions 120 and 121 each coordinate Mg(2+). Position 121 is an N6-carboxylysine (lysine 121). Cysteine 192 is a [2Fe-2S] cluster binding site. Glutamate 442 serves as a coordination point for Mg(2+). Serine 468 acts as the Proton acceptor in catalysis.

It belongs to the IlvD/Edd family. Homodimer. Requires [2Fe-2S] cluster as cofactor. Mg(2+) is required as a cofactor.

It catalyses the reaction (2R)-2,3-dihydroxy-3-methylbutanoate = 3-methyl-2-oxobutanoate + H2O. It carries out the reaction (2R,3R)-2,3-dihydroxy-3-methylpentanoate = (S)-3-methyl-2-oxopentanoate + H2O. The protein operates within amino-acid biosynthesis; L-isoleucine biosynthesis; L-isoleucine from 2-oxobutanoate: step 3/4. Its pathway is amino-acid biosynthesis; L-valine biosynthesis; L-valine from pyruvate: step 3/4. In terms of biological role, functions in the biosynthesis of branched-chain amino acids. Catalyzes the dehydration of (2R,3R)-2,3-dihydroxy-3-methylpentanoate (2,3-dihydroxy-3-methylvalerate) into 2-oxo-3-methylpentanoate (2-oxo-3-methylvalerate) and of (2R)-2,3-dihydroxy-3-methylbutanoate (2,3-dihydroxyisovalerate) into 2-oxo-3-methylbutanoate (2-oxoisovalerate), the penultimate precursor to L-isoleucine and L-valine, respectively. This is Dihydroxy-acid dehydratase from Campylobacter hominis (strain ATCC BAA-381 / DSM 21671 / CCUG 45161 / LMG 19568 / NCTC 13146 / CH001A).